Consider the following 628-residue polypeptide: DNA primase (628 aa).

The segment at 40-64 (CPFHEERSPSFSVAEDKQIFHCFGC) adopts a CHC2-type zinc-finger fold. Positions 269-351 (NTVLLFEGFM…DLSIVSIPEK (83 aa)) constitute a Toprim domain. The Mg(2+) site is built by Glu-275, Asp-319, and Asp-321.

It belongs to the DnaG primase family. Monomer. Interacts with DnaB. The cofactor is Zn(2+). Mg(2+) serves as cofactor.

It carries out the reaction ssDNA + n NTP = ssDNA/pppN(pN)n-1 hybrid + (n-1) diphosphate.. Functionally, RNA polymerase that catalyzes the synthesis of short RNA molecules used as primers for DNA polymerase during DNA replication. This Enterococcus faecalis (strain ATCC 700802 / V583) protein is DNA primase.